Reading from the N-terminus, the 468-residue chain is 3-isopropylmalate dehydratase large subunit (468 aa).

Positions 349, 409, and 412 each coordinate [4Fe-4S] cluster.

The protein belongs to the aconitase/IPM isomerase family. LeuC type 1 subfamily. In terms of assembly, heterodimer of LeuC and LeuD. It depends on [4Fe-4S] cluster as a cofactor.

It catalyses the reaction (2R,3S)-3-isopropylmalate = (2S)-2-isopropylmalate. It participates in amino-acid biosynthesis; L-leucine biosynthesis; L-leucine from 3-methyl-2-oxobutanoate: step 2/4. Catalyzes the isomerization between 2-isopropylmalate and 3-isopropylmalate, via the formation of 2-isopropylmaleate. The protein is 3-isopropylmalate dehydratase large subunit of Shewanella baltica (strain OS185).